The sequence spans 335 residues: 3-hydroxyproline 2-epimerase (335 aa).

The active-site Proton acceptor is the Cys-91. Substrate-binding positions include 92 to 93 (GH), Asp-251, and 256 to 257 (GS).

It belongs to the proline racemase family.

The catalysed reaction is trans-3-hydroxy-L-proline = cis-3-hydroxy-D-proline. The enzyme catalyses trans-4-hydroxy-L-proline = cis-4-hydroxy-D-proline. Its function is as follows. Catalyzes the epimerization of trans-3-hydroxy-L-proline (t3LHyp) to cis-3-hydroxy-D-proline (c3DHyp) in vitro. Can also catalyze the epimerization of trans-4-hydroxy-L-proline (t3LHyp) to cis-4-hydroxy-D-proline (c4DHyp), albeit with 3.6-fold lower efficiency. Displays no proline racemase activity. The chain is 3-hydroxyproline 2-epimerase from Burkholderia multivorans (strain ATCC 17616 / 249).